The primary structure comprises 308 residues: Transaldolase (308 aa).

K125 (schiff-base intermediate with substrate) is an active-site residue.

Belongs to the transaldolase family. Type 1 subfamily. Homodimer.

The protein localises to the cytoplasm. It catalyses the reaction D-sedoheptulose 7-phosphate + D-glyceraldehyde 3-phosphate = D-erythrose 4-phosphate + beta-D-fructose 6-phosphate. The protein operates within carbohydrate degradation; pentose phosphate pathway; D-glyceraldehyde 3-phosphate and beta-D-fructose 6-phosphate from D-ribose 5-phosphate and D-xylulose 5-phosphate (non-oxidative stage): step 2/3. Functionally, transaldolase is important for the balance of metabolites in the pentose-phosphate pathway. The polypeptide is Transaldolase (Ectopseudomonas mendocina (strain ymp) (Pseudomonas mendocina)).